A 616-amino-acid chain; its full sequence is Glutamine--fructose-6-phosphate aminotransferase [isomerizing] (616 aa).

Cys-2 serves as the catalytic Nucleophile; for GATase activity. The 220-residue stretch at Cys-2–Glu-221 folds into the Glutamine amidotransferase type-2 domain. SIS domains follow at residues Leu-288–Thr-428 and Leu-461–Pro-606. Catalysis depends on Lys-611, which acts as the For Fru-6P isomerization activity.

In terms of assembly, homodimer.

Its subcellular location is the cytoplasm. The catalysed reaction is D-fructose 6-phosphate + L-glutamine = D-glucosamine 6-phosphate + L-glutamate. Functionally, catalyzes the first step in hexosamine metabolism, converting fructose-6P into glucosamine-6P using glutamine as a nitrogen source. In Leifsonia xyli subsp. xyli (strain CTCB07), this protein is Glutamine--fructose-6-phosphate aminotransferase [isomerizing].